The primary structure comprises 332 residues: uncharacterized protein (332 aa).

A helical transmembrane segment spans residues 185–205 (MVYGYSVFNAFFILLALPNVI).

Its subcellular location is the host membrane. This is an uncharacterized protein from Sulfolobus islandicus filamentous virus (isolate Iceland/Hveragerdi) (SIFV).